The sequence spans 30 residues: Photosystem I reaction center subunit XII (30 aa).

A helical membrane pass occupies residues 7 to 29 (VYIALMAALLASVLAIRLGATLY).

Belongs to the PsaM family.

It is found in the plastid. Its subcellular location is the chloroplast thylakoid membrane. The protein is Photosystem I reaction center subunit XII of Thalassiosira pseudonana (Marine diatom).